The sequence spans 257 residues: Imidazole glycerol phosphate synthase subunit HisF (257 aa).

Active-site residues include Asp12 and Asp131.

It belongs to the HisA/HisF family. As to quaternary structure, heterodimer of HisH and HisF.

Its subcellular location is the cytoplasm. It carries out the reaction 5-[(5-phospho-1-deoxy-D-ribulos-1-ylimino)methylamino]-1-(5-phospho-beta-D-ribosyl)imidazole-4-carboxamide + L-glutamine = D-erythro-1-(imidazol-4-yl)glycerol 3-phosphate + 5-amino-1-(5-phospho-beta-D-ribosyl)imidazole-4-carboxamide + L-glutamate + H(+). It functions in the pathway amino-acid biosynthesis; L-histidine biosynthesis; L-histidine from 5-phospho-alpha-D-ribose 1-diphosphate: step 5/9. In terms of biological role, IGPS catalyzes the conversion of PRFAR and glutamine to IGP, AICAR and glutamate. The HisF subunit catalyzes the cyclization activity that produces IGP and AICAR from PRFAR using the ammonia provided by the HisH subunit. In Rhodococcus erythropolis (strain PR4 / NBRC 100887), this protein is Imidazole glycerol phosphate synthase subunit HisF.